Here is a 126-residue protein sequence, read N- to C-terminus: MARIAGVDLPRDKRVEIGLTYIYGIGLTRSKEILSKIELDPDTRVRDLPDNAIAQLREIIETDYQVEGDLRRFESMNIKRLADIGCYRGRRHRLNLPVRGQRTRTNARTRRGARQTVAGKKKAPSK.

The interval 100-126 (GQRTRTNARTRRGARQTVAGKKKAPSK) is disordered. Residues 101-126 (QRTRTNARTRRGARQTVAGKKKAPSK) show a composition bias toward basic residues.

The protein belongs to the universal ribosomal protein uS13 family. As to quaternary structure, part of the 30S ribosomal subunit.

It localises to the plastid. The protein localises to the cyanelle. Its function is as follows. Located at the top of the head of the 30S subunit, it contacts several helices of the 16S rRNA. In Cyanophora paradoxa, this protein is Small ribosomal subunit protein uS13c.